The chain runs to 504 residues: Glycerol kinase (504 aa).

An ADP-binding site is contributed by threonine 13. Positions 13, 14, and 15 each coordinate ATP. Residue threonine 13 coordinates sn-glycerol 3-phosphate. ADP is bound at residue arginine 17. Sn-glycerol 3-phosphate-binding residues include arginine 83, glutamate 84, and tyrosine 135. Positions 83, 84, and 135 each coordinate glycerol. Histidine 231 is modified (phosphohistidine; by HPr). Aspartate 245 is a binding site for sn-glycerol 3-phosphate. Aspartate 245 and glutamine 246 together coordinate glycerol. ADP-binding residues include threonine 267 and glycine 310. ATP is bound by residues threonine 267, glycine 310, glutamine 314, and glycine 411. ADP-binding residues include glycine 411 and asparagine 415.

Belongs to the FGGY kinase family. As to quaternary structure, homotetramer and homodimer (in equilibrium). The phosphoenolpyruvate-dependent sugar phosphotransferase system (PTS), including enzyme I, and histidine-containing protein (HPr) are required for the phosphorylation, which leads to the activation of the enzyme.

The enzyme catalyses glycerol + ATP = sn-glycerol 3-phosphate + ADP + H(+). It participates in polyol metabolism; glycerol degradation via glycerol kinase pathway; sn-glycerol 3-phosphate from glycerol: step 1/1. With respect to regulation, activated by phosphorylation and inhibited by fructose 1,6-bisphosphate (FBP). Functionally, key enzyme in the regulation of glycerol uptake and metabolism. Catalyzes the phosphorylation of glycerol to yield sn-glycerol 3-phosphate. The sequence is that of Glycerol kinase from Ligilactobacillus salivarius (strain UCC118) (Lactobacillus salivarius).